The primary structure comprises 459 residues: Argininosuccinate lyase (459 aa).

This sequence belongs to the lyase 1 family. Argininosuccinate lyase subfamily.

It localises to the cytoplasm. It carries out the reaction 2-(N(omega)-L-arginino)succinate = fumarate + L-arginine. It participates in amino-acid biosynthesis; L-arginine biosynthesis; L-arginine from L-ornithine and carbamoyl phosphate: step 3/3. The sequence is that of Argininosuccinate lyase from Desulforudis audaxviator (strain MP104C).